Consider the following 431-residue polypeptide: 3-phosphoshikimate 1-carboxyvinyltransferase (431 aa).

3-phosphoshikimate contacts are provided by K26, S27, and R31. K26 contributes to the phosphoenolpyruvate binding site. Phosphoenolpyruvate is bound by residues G99 and R127. S170, S171, Q172, S199, E314, and H343 together coordinate 3-phosphoshikimate. Q172 is a phosphoenolpyruvate binding site. Residue E314 is the Proton acceptor of the active site. Phosphoenolpyruvate contacts are provided by R347, R388, and K413.

This sequence belongs to the EPSP synthase family. As to quaternary structure, monomer.

The protein resides in the cytoplasm. It carries out the reaction 3-phosphoshikimate + phosphoenolpyruvate = 5-O-(1-carboxyvinyl)-3-phosphoshikimate + phosphate. The protein operates within metabolic intermediate biosynthesis; chorismate biosynthesis; chorismate from D-erythrose 4-phosphate and phosphoenolpyruvate: step 6/7. Its function is as follows. Catalyzes the transfer of the enolpyruvyl moiety of phosphoenolpyruvate (PEP) to the 5-hydroxyl of shikimate-3-phosphate (S3P) to produce enolpyruvyl shikimate-3-phosphate and inorganic phosphate. In Mycobacterium ulcerans (strain Agy99), this protein is 3-phosphoshikimate 1-carboxyvinyltransferase.